Here is a 416-residue protein sequence, read N- to C-terminus: Putative cell agglutination protein SPAC1348.08c (416 aa).

An N-terminal signal peptide occupies residues 1–27; that stretch reads MNFFLYFRTIFLIQLYFFNYSTFGCSA. An N-linked (GlcNAc...) asparagine glycan is attached at N19. 2 consecutive repeat copies span residues 90-124 and 125-160. The 2 X 36 AA approximate tandem repeats stretch occupies residues 90 to 160; the sequence is GTVTETTISG…GTVEIVSPKN (71 aa). Residues 224–390 enclose the PA14 domain; that stretch reads FNEPAYFGSS…GPLATTSYSY (167 aa). N-linked (GlcNAc...) asparagine glycosylation occurs at N344.

It is found in the cell surface. Functionally, may be involved in agglutination during conjugation or other aspects of colony formation. In Schizosaccharomyces pombe (strain 972 / ATCC 24843) (Fission yeast), this protein is Putative cell agglutination protein SPAC1348.08c.